A 67-amino-acid polypeptide reads, in one-letter code: Conotoxin TsMMSK-011 (67 aa).

Residues 1-22 (MMSKLGVLLTICLLLFPLTVLP) form the signal peptide. The propeptide occupies 23–50 (MDGDQPADLPALRTQDIATDQSPWFDPV). 3 disulfides stabilise this stretch: C53-C65, C54-C61, and C58-C64. Position 63 is a 4-hydroxyproline (P63).

The protein belongs to the conotoxin M superfamily. Expressed by the venom duct.

Its subcellular location is the secreted. The protein is Conotoxin TsMMSK-011 of Conus tessulatus (Tessellate cone).